Here is a 225-residue protein sequence, read N- to C-terminus: tRNA (guanine-N(1)-)-methyltransferase (225 aa).

S-adenosyl-L-methionine-binding positions include Gly-112 and 132 to 137 (IGDYVL).

The protein belongs to the RNA methyltransferase TrmD family. As to quaternary structure, homodimer.

It is found in the cytoplasm. It catalyses the reaction guanosine(37) in tRNA + S-adenosyl-L-methionine = N(1)-methylguanosine(37) in tRNA + S-adenosyl-L-homocysteine + H(+). Specifically methylates guanosine-37 in various tRNAs. The protein is tRNA (guanine-N(1)-)-methyltransferase of Flavobacterium psychrophilum (strain ATCC 49511 / DSM 21280 / CIP 103535 / JIP02/86).